A 431-amino-acid polypeptide reads, in one-letter code: Enolase (431 aa).

Residues His-157 and Glu-166 each contribute to the substrate site. Glu-209 functions as the Proton donor in the catalytic mechanism. The Mg(2+) site is built by Asp-244, Glu-293, and Asp-318. Residues Glu-293 and Asp-318 each coordinate substrate. Lys-343 (proton acceptor) is an active-site residue. Substrate is bound by residues Ser-370–Ser-373 and Lys-394.

It belongs to the enolase family. In terms of assembly, homodimer. Requires Mg(2+) as cofactor.

It is found in the cytoplasm. It carries out the reaction (2R)-2-phosphoglycerate = phosphoenolpyruvate + H2O. It functions in the pathway carbohydrate degradation; glycolysis; pyruvate from D-glyceraldehyde 3-phosphate: step 4/5. The polypeptide is Enolase (ENO) (Fasciola hepatica (Liver fluke)).